A 451-amino-acid polypeptide reads, in one-letter code: Gamma-aminobutyric acid receptor subunit alpha-2 (451 aa).

The N-terminal stretch at 1-28 (MKTKLSTCNVWSLLLVLLVWDPVRLVLA) is a signal peptide. At 29–249 (NIQEDEAKNN…MTAHFHLKRK (221 aa)) the chain is on the extracellular side. Residue Asn-38 is glycosylated (N-linked (GlcNAc...) asparagine). Arg-94 lines the 4-aminobutanoate pocket. Residue Asn-138 is glycosylated (N-linked (GlcNAc...) asparagine). A 4-aminobutanoate-binding site is contributed by Thr-157. A disulfide bridge connects residues Cys-166 and Cys-180. The helical transmembrane segment at 250-270 (IGYFVIQTYLPCIMTVILSQV) threads the bilayer. The Cytoplasmic segment spans residues 271 to 280 (SFWLNRESVP). The chain crosses the membrane as a helical span at residues 281–300 (ARTVFGVTTVLTMTTLSISA). The Extracellular portion of the chain corresponds to 301–311 (RNSLPKVAYAT). The helical transmembrane segment at 312 to 332 (AMDWFIAVCYAFVFSALIEFA) threads the bilayer. Residues 333-420 (TVNYFTKRGW…FNSVSKIDRM (88 aa)) lie on the Cytoplasmic side of the membrane. Residues 389–408 (KSATTPEPNKKPENKPAEAK) are disordered. The span at 396 to 408 (PNKKPENKPAEAK) shows a compositional bias: basic and acidic residues. A helical membrane pass occupies residues 421-441 (SRIVFPVLFGTFNLVYWATYL). Residues 442–451 (NREPVLGVSP) lie on the Extracellular side of the membrane.

It belongs to the ligand-gated ion channel (TC 1.A.9) family. Gamma-aminobutyric acid receptor (TC 1.A.9.5) subfamily. GABRA2 sub-subfamily. In terms of assembly, heteropentamer, formed by a combination of alpha (GABRA1-6), beta (GABRB1-3), gamma (GABRG1-3), delta (GABRD), epsilon (GABRE), rho (GABRR1-3), pi (GABRP) and theta (GABRQ) subunits, each subunit exhibiting distinct physiological and pharmacological properties. Interacts with UBQLN1. Interacts with KIF21B. Interacts with LHFPL4. Interacts with SHISA7; interaction leads to the regulation of GABA(A) receptor trafficking, channel deactivation kinetics and pharmacology. In terms of processing, glycosylated.

It is found in the postsynaptic cell membrane. It localises to the cell membrane. The protein localises to the cytoplasmic vesicle membrane. Its subcellular location is the cell projection. The protein resides in the dendrite. The catalysed reaction is chloride(in) = chloride(out). With respect to regulation, activated by pentobarbital. Inhibited by the antagonist bicuculline. Functionally, alpha subunit of the heteropentameric ligand-gated chloride channel gated by gamma-aminobutyric acid (GABA), a major inhibitory neurotransmitter in the brain. GABA-gated chloride channels, also named GABA(A) receptors (GABAAR), consist of five subunits arranged around a central pore and contain GABA active binding site(s) located at the alpha and beta subunit interface(s). When activated by GABA, GABAARs selectively allow the flow of chloride anions across the cell membrane down their electrochemical gradient. Chloride influx into the postsynaptic neuron following GABAAR opening decreases the neuron ability to generate a new action potential, thereby reducing nerve transmission. The alpha-2 subunit exhibits synaptogenic activity together with beta-2 and very little to no activity together with beta-3, the gamma-2 subunit being necessary but not sufficient to induce rapid synaptic contacts formation. This chain is Gamma-aminobutyric acid receptor subunit alpha-2, found in Mus musculus (Mouse).